Reading from the N-terminus, the 72-residue chain is Gas vesicle protein A (72 aa).

This sequence belongs to the gas vesicle GvpA family. As to quaternary structure, the gas vesicle shell is 2 nm thick and consists of a single layer of this protein. It forms helical ribs nearly perpendicular to the long axis of the vesicle.

Its subcellular location is the gas vesicle shell. Functionally, gas vesicles are hollow, gas filled proteinaceous nanostructures found in some microorganisms. During planktonic growth they allow positioning of the organism at a favorable depth for light or nutrient acquisition. GvpA forms the protein shell. In Synechococcus sp. (strain JA-3-3Ab) (Cyanobacteria bacterium Yellowstone A-Prime), this protein is Gas vesicle protein A.